We begin with the raw amino-acid sequence, 461 residues long: Ribulose bisphosphate carboxylase (461 aa).

Asparagine 112 contributes to the substrate binding site. The Proton acceptor role is filled by lysine 167. Position 169 (lysine 169) interacts with substrate. Positions 192, 194, and 195 each coordinate Mg(2+). Lysine 192 carries the post-translational modification N6-carboxylysine. Catalysis depends on histidine 288, which acts as the Proton acceptor. Arginine 289, histidine 322, and serine 369 together coordinate substrate.

Belongs to the RuBisCO large chain family. Type II subfamily. As to quaternary structure, homodimer. Mg(2+) serves as cofactor.

It catalyses the reaction 2 (2R)-3-phosphoglycerate + 2 H(+) = D-ribulose 1,5-bisphosphate + CO2 + H2O. The catalysed reaction is D-ribulose 1,5-bisphosphate + O2 = 2-phosphoglycolate + (2R)-3-phosphoglycerate + 2 H(+). RuBisCO catalyzes two reactions: the carboxylation of D-ribulose 1,5-bisphosphate, the primary event in carbon dioxide fixation, as well as the oxidative fragmentation of the pentose substrate. Both reactions occur simultaneously and in competition at the same active site. The polypeptide is Ribulose bisphosphate carboxylase (Rhodopseudomonas palustris (strain BisB5)).